The following is a 486-amino-acid chain: Arginine/agmatine antiporter (486 aa).

Helical transmembrane passes span 12–32 (LGAIALAGMVISSMIGGGIFS), 41–61 (AGVGAIILAWILTGVGMFFIA), 85–105 (GFGPYIGFTIGWGYWLCQIFG), 132–152 (PAILGGSILIWVFNFIVLKGI), 160–180 (IIGTVGKLVPLIVFIIITAFL), 211–231 (STMLVTLWAFIGIEGAVVMSA), 242–262 (ATILGFTGCLTVYILLSILPF), 296–316 (VGLLIAVLSSWLSWTMIVAEI), 341–361 (VSLYVTSALMQIAMLLVYFST), 367–387 (MLSITGVMVLPAYFASAAFLV), 418–438 (IWLIYAGGLKYLLMAIILLAL), and 461–481 (EVTEITIIAFLALLAIFLFST).

The protein belongs to the amino acid-polyamine-organocation (APC) superfamily. Basic amino acid/polyamine antiporter (APA) (TC 2.A.3.2) family.

Its subcellular location is the cell inner membrane. Catalyzes the exchange of L-arginine for agmatine. The arginine uptake by the bacterium in the macrophage may be a virulence factor against the host innate immune response. The polypeptide is Arginine/agmatine antiporter (aaxC) (Chlamydia abortus (strain DSM 27085 / S26/3) (Chlamydophila abortus)).